The sequence spans 512 residues: MLTMGTALSQQVDANWQTYIMIAVYFLILIVIGFYGYKQATGNLSEYMLGGRSIGPYITALSAGASDMSGWMIMGLPGSVYSTGLSAMWITIGLTLGAYINYFVVAPRLRVYTELAGDAITLPDFFKNRLNDKNNVLKIISGLIIVVFFTLYTHSGFVSGGKLFESAFGLDYHFGLILVAFIVIFYTFFGGYLAVSITDFFQGVIMLIAMVMVPIVAMMNLNGWGTFHDVAAMKPTNLNLFKGLSFIGIISLFSWGLGYFGQPHIIIRFMSIKSHKMLPKARRLGISWMAVGLLGAVAVGLTGIAFVPAYHIKLEDPETLFIVMSQVLFHPLVGGFLLAAILAAIMSTISSQLLVTSSSLTEDFYKLIRGEEKAKTHQKEFVMIGRLSVLVVAIVAIAIAWNPNDTILNLVGNAWAGFGASFSPLVLFALYWKGLTRAGAVSGMVSGALVVIVWIAWIKPLAHINEIFGLYEIIPGFIVSVIVTYVVSKLTKKPGAFVETDLNKVRDIVREK.

A run of 13 helical transmembrane segments spans residues 16–36, 54–74, 85–105, 139–159, 174–194, 200–220, 247–267, 286–306, 327–347, 381–401, 410–430, 438–458, and 467–487; these read WQTY…GFYG, IGPY…WMIM, LSAM…YFVV, IISG…GFVS, FGLI…GYLA, FFQG…AMMN, IGII…HIII, ISWM…GIAF, VLFH…AIMS, FVMI…AIAW, LVGN…LFAL, AGAV…IAWI, and IFGL…TYVV.

It belongs to the sodium:solute symporter (SSF) (TC 2.A.21) family.

The protein localises to the cell membrane. It catalyses the reaction L-proline(in) + Na(+)(in) = L-proline(out) + Na(+)(out). Functionally, catalyzes the sodium-dependent uptake of extracellular L-proline. Since most S.aureus strains are L-proline auxotrophs, this transporter may aid the bacterial persistence during an infection of tissues with low proline concentrations. This is Sodium/proline symporter (putP) from Staphylococcus aureus (strain USA300).